The chain runs to 296 residues: 2-haloacid dehalogenase, configuration-inverting (296 aa).

It belongs to the HAD-like hydrolase superfamily. S-2-haloalkanoic acid dehalogenase family.

The enzyme catalyses an (S)-2-haloacid + H2O = a (2R)-2-hydroxycarboxylate + a halide anion + H(+). It carries out the reaction an (R)-2-haloacid + H2O = a (2S)-2-hydroxycarboxylate + a halide anion + H(+). Its function is as follows. Dehalogenates both (S)- and (R)-2-haloalkanoic acids to the corresponding (R)- and (S)-hydroxyalkanoic acids, respectively, with inversion of configuration at C-2. Acts on 2-haloalkanoic acids whose carbon chain lengths are five or less. The protein is 2-haloacid dehalogenase, configuration-inverting (dhlC) of Alcaligenes xylosoxydans xylosoxydans (Achromobacter xylosoxidans).